The following is a 139-amino-acid chain: Actin-depolymerizing factor 9 (139 aa).

In terms of domain architecture, ADF-H spans 7-139; sequence GLAVNDECKF…SLDIIRARAH (133 aa).

This sequence belongs to the actin-binding proteins ADF family.

Its function is as follows. Actin-depolymerizing protein. Severs actin filaments (F-actin) and binds to actin monomers. This Oryza sativa subsp. japonica (Rice) protein is Actin-depolymerizing factor 9 (ADF9).